A 333-amino-acid chain; its full sequence is Phosphate acetyltransferase (333 aa).

The protein belongs to the phosphate acetyltransferase and butyryltransferase family.

It localises to the cytoplasm. It carries out the reaction acetyl-CoA + phosphate = acetyl phosphate + CoA. It participates in metabolic intermediate biosynthesis; acetyl-CoA biosynthesis; acetyl-CoA from acetate: step 2/2. In Clostridium acetobutylicum (strain ATCC 824 / DSM 792 / JCM 1419 / IAM 19013 / LMG 5710 / NBRC 13948 / NRRL B-527 / VKM B-1787 / 2291 / W), this protein is Phosphate acetyltransferase (pta).